A 338-amino-acid polypeptide reads, in one-letter code: Protein SPATA31F3 (338 aa).

A helical membrane pass occupies residues 7–29; it reads VLWDVGYPLYTYGSICIIALIIW. Phosphoserine is present on Ser-152. Residues 290 to 306 are compositionally biased toward basic and acidic residues; it reads DRTKNIEKSPTVTKDHV. The segment at 290–338 is disordered; that stretch reads DRTKNIEKSPTVTKDHVWGATTQKTTEDPEAQPPSTEEEGLIFCDAPSA.

The protein belongs to the SPATA31 family.

The protein localises to the membrane. This is Protein SPATA31F3 from Homo sapiens (Human).